The sequence spans 1307 residues: Contactin-associated protein like 5-3 (1307 aa).

An N-terminal signal peptide occupies residues 1-24 (MDFVPRLNSVLTLVLSGLWHFGLT). Over 25–1238 (ATNCDNCDDP…PLTNAVLSDS (1214 aa)) the chain is Extracellular. One can recognise an F5/8 type C domain in the interval 31–175 (CDDPLASFLS…IGMRMEVYGC (145 aa)). A disulfide bridge links Cys-31 with Cys-175. Laminin G-like domains follow at residues 181 to 361 (VADF…TFSC) and 368 to 545 (PITF…IDLC). N-linked (GlcNAc...) asparagine glycosylation occurs at Asn-283. An intrachain disulfide couples Cys-330 to Cys-361. Asn-497 is a glycosylation site (N-linked (GlcNAc...) asparagine). 4 disulfide bridges follow: Cys-513–Cys-545, Cys-551–Cys-562, Cys-556–Cys-571, and Cys-573–Cys-583. The EGF-like 1 domain occupies 547–584 (IKDRCLPNYCEHGGHCVQTWTTFYCNCSNTGYTGATCH). The region spanning 585–792 (DSIYEQSCEV…LRCYGDRHFW (208 aa)) is the Fibrinogen C-terminal domain. Asn-600, Asn-624, and Asn-637 each carry an N-linked (GlcNAc...) asparagine glycan. In terms of domain architecture, Laminin G-like 3 spans 793–958 (NAVSFSTEAS…MVTSGVRPGC (166 aa)). 5 cysteine pairs are disulfide-bonded: Cys-931/Cys-958, Cys-962/Cys-975, Cys-969/Cys-984, Cys-986/Cys-996, and Cys-1165/Cys-1200. The region spanning 959 to 997 (PGHCSSYGNNCHNGGKCVEKHNSYSCDCTKSPYEGPFCQ) is the EGF-like 2 domain. The 182-residue stretch at 1019–1200 (PVSKNTSTSS…VQGSLREFSC (182 aa)) folds into the Laminin G-like 4 domain. The chain crosses the membrane as a helical span at residues 1239 to 1259 (AVIGGVIAVVTFITFCVIGIM). Residues 1260 to 1307 (TRFLYQHKQSHCTSQKKEKEYSENLDSSFRHDIDLQSTTSKCKREYFI) are Cytoplasmic-facing.

Belongs to the neurexin family.

The protein resides in the membrane. Its function is as follows. May play a role in the correct development and proper functioning of the peripheral and central nervous system and be involved in cell adhesion and intercellular communication. The sequence is that of Contactin-associated protein like 5-3 (Cntnap5c) from Rattus norvegicus (Rat).